A 307-amino-acid polypeptide reads, in one-letter code: Pantothenate kinase (307 aa).

Residue 90–97 (GSVAVGKS) participates in ATP binding.

This sequence belongs to the prokaryotic pantothenate kinase family.

It is found in the cytoplasm. The enzyme catalyses (R)-pantothenate + ATP = (R)-4'-phosphopantothenate + ADP + H(+). Its pathway is cofactor biosynthesis; coenzyme A biosynthesis; CoA from (R)-pantothenate: step 1/5. The polypeptide is Pantothenate kinase (Enterococcus faecalis (strain ATCC 700802 / V583)).